Here is a 1297-residue protein sequence, read N- to C-terminus: Protein ENHANCED DOWNY MILDEW 2 (1297 aa).

Residues 222 to 281 form a PHD-type 1; degenerate zinc finger; the sequence is ESVCAICDNGGEILCCEGSCLRSFHATKKDGEDSLCDSLGFNKMQVEAIQKYFCPNCEHK. Cys237, Cys241, Cys275, Cys278, Cys285, Cys288, Cys306, Cys311, His316, Cys319, Cys346, and His349 together coordinate Zn(2+). A PHD-type 2; atypical zinc finger spans residues 282–352; the sequence is IHQCFICKNL…EYTCPLHKCS (71 aa). Residues 351–417 form a PHD-type 3; degenerate zinc finger; that stretch reads CSVCENGEVK…RVLIYCQEHE (67 aa). The Nuclear localization signal 1 signature appears at 445-452; sequence QRRILESH. Disordered regions lie at residues 471-547 and 562-598; these read CGKA…ARDA and TQEP…IPTL. Residues 475-487 show a composition bias toward low complexity; it reads SKNSFRSSFPSSK. Residues 492 to 499 carry the Nuclear localization signal 2 motif; sequence TKKHGLVS. A compositionally biased stretch (basic and acidic residues) spans 526-547; it reads KMMEDSREAGKNKLGVKEARDA. 2 consecutive short sequence motifs (nuclear localization signal) follow at residues 610–617 and 979–986; these read MKKATEEI and LKKEGKTK. Basic and acidic residues-rich tracts occupy residues 969-990 and 1096-1109; these read QSDH…DYSG and EVSR…RTSR. Disordered stretches follow at residues 969–1017, 1085–1109, and 1260–1297; these read QSDH…GELS, HGCK…RTSR, and FPLP…WIND.

In terms of assembly, interacts with WNK8 in nucleus; this interaction is involved in developmental processes regulation but not in RPP7-dependent disease resistance. Interacts with EML1 and EML2 in nucleus. Component of the ASI1-AIPP1-EDM2 (AAE) RNA regulatory complex composed of at least AIPP1/EDM3, ASI1 and EDM2 and may contain CPL2, AIPP2 and AIPP3/BDT1. Binds directly to AIPP1/EDM3. Co-associates with AIPP1/EDM3 to histone H3 lysine 9 dimethylation (H3K9me2)-marked chromatin and transcripts at a critical proximal polyadenylation site of RPP7 to hamper proximal transcript polyadeylation/termination. Phosphorylated by WNK8.

The protein resides in the nucleus. Its function is as follows. Cellular antisilencing factor and regulator of genome DNA methylation patterns involved in the regulation of chromatin states. Together with SUVH4, monitors repressive epigenetic marks H3K27me1, H3K9me2, and prevents DNA-methylation at CHG sites, affecting especially the expression of transposons and developmentally important genes. Collaboratively with ASI1 and AIPP1/EDM3, the AAE complex regulates alternative RNA processing (e.g. alternative splicing) and epigenetic silencing (e.g. H3K9me2) of intronic heterochromatin-containing genes as well as genic heterochromatin-containing genes by promoting distal 3' polyadenylation. Epigenetic reader that binds DNA and contributes to transcriptional transposable element (TE) silencing by modulating levels of the repressive post-translational histone modifications (PHM) H3K9me2. In cv. Columbia, required for RPP7-dependent disease resistance against the Hyaloperonospora arabidopsidis isolate Hiks1, by promoting levels of RPP7 via alternative polyadenylation (APA), resulting from cooption of epigenetic information at the TE insertion locus COPIA-R7. Exhibits a global role in NLR (nucleotide-binding, leucine-rich repeat) defense genes epigenetic (e.g. H3K9me2 hallmarks) expression control; promotes the accumulation of RPP7, RPP4 and some other proteins, but mediates the repression of several other NLR products, probably to compensate for fitness penalties caused by defense mechanisms. Regulates development processes such as the formation of leaf pavement cells, leaf expansion, fertility and flowering. Prevents FLC accumulation to control flowering. Modulates stomatal development by regulating the methylation-mediated silencing of ERECTA receptor genes (e.g. ER, ERL1 and ERL2) and preventing cell divisions. The polypeptide is Protein ENHANCED DOWNY MILDEW 2 (Arabidopsis thaliana (Mouse-ear cress)).